Here is a 136-residue protein sequence, read N- to C-terminus: Protein NrdI (136 aa).

The protein belongs to the NrdI family.

Its function is as follows. Probably involved in ribonucleotide reductase function. The chain is Protein NrdI from Enterobacter sp. (strain 638).